Consider the following 225-residue polypeptide: Insulin-induced gene 2 protein (225 aa).

Topologically, residues 1–28 (MAENDAKPTLPKKSGPYISSVTSHGMNL) are cytoplasmic. Residues 29–51 (VIRGIVLFFIGVFLALVLNLLQI) form a helical membrane-spanning segment. The Lumenal segment spans residues 52–70 (QRNVTLFPPDVITSIFSSA). A helical transmembrane segment spans residues 71–88 (WWVPPCCGTASAVIGLLY). The Cytoplasmic portion of the chain corresponds to 89-103 (PCMDRHLGEPHKFKR). The chain crosses the membrane as a helical span at residues 104–126 (EWSSVMRCVAVFVGINHASAKVD). Topologically, residues 127–129 (FAN) are lumenal. The helical transmembrane segment at 130–148 (NIQLSLTLAALSIGLWWTF) threads the bilayer. Topologically, residues 149–153 (DRSRS) are cytoplasmic. A helical transmembrane segment spans residues 154–175 (GFGLGVGIAFLATLVSQLLVYN). At 176–189 (GVYQYTSPDFLYVR) the chain is on the lumenal side. The helical transmembrane segment at 190-207 (SWLPCIFFAGGITMGNIG) threads the bilayer. At 208-225 (RQLAMYECKVIAEKSHED) the chain is on the cytoplasmic side. Positions 219–225 (AEKSHED) match the KxHxx motif.

It belongs to the INSIG family. In terms of assembly, interacts with SCAP; interaction is direct and only takes place in the presence of sterols; it prevents interaction between SCAP and the coat protein complex II (COPII). Associates with the SCAP-SREBP complex; association is mediated via its interaction with SCAP and only takes place in the presence of sterols.

The protein resides in the endoplasmic reticulum membrane. Functionally, oxysterol-binding protein that mediates feedback control of cholesterol synthesis by controlling both endoplasmic reticulum to Golgi transport of SCAP and degradation of HMGCR. Acts as a negative regulator of cholesterol biosynthesis by mediating the retention of the SCAP-SREBP complex in the endoplasmic reticulum, thereby blocking the processing of sterol regulatory element-binding proteins (SREBPs). Binds oxysterol, including 22-hydroxycholesterol, 24-hydroxycholesterol, 25-hydroxycholesterol and 27-hydroxycholesterol, regulating interaction with SCAP and retention of the SCAP-SREBP complex in the endoplasmic reticulum. In presence of oxysterol, interacts with SCAP, retaining the SCAP-SREBP complex in the endoplasmic reticulum, thereby preventing SCAP from escorting SREBPs to the Golgi. Sterol deprivation reduces oxysterol-binding, disrupting the interaction between INSIG2 and SCAP, thereby promoting Golgi transport of the SCAP-SREBP complex, followed by processing and nuclear translocation of SREBPs. Also regulates cholesterol synthesis by regulating degradation of HMGCR. This chain is Insulin-induced gene 2 protein, found in Gallus gallus (Chicken).